Reading from the N-terminus, the 105-residue chain is uncharacterized protein (105 aa).

Positions 47–105 (ENASAPRIQPSVTPSPAAPPSTDQLMMEKMMGSAGLNKYRKQEKEKQEEDGNGESLFDF) are disordered. Positions 86 to 95 (RKQEKEKQEE) are enriched in basic and acidic residues.

This is an uncharacterized protein from Bacillus subtilis (strain 168).